Consider the following 311-residue polypeptide: HPr kinase/phosphorylase (311 aa).

Residues His-136 and Lys-157 contribute to the active site. 151–158 is an ATP binding site; sequence GDSGIGKS. Ser-158 serves as a coordination point for Mg(2+). Catalysis depends on Asp-175, which acts as the Proton acceptor; for phosphorylation activity. Proton donor; for dephosphorylation activity. The interval 199–208 is important for the catalytic mechanism of both phosphorylation and dephosphorylation; sequence LEIRGLGIIN. Glu-200 provides a ligand contact to Mg(2+). Residue Arg-241 is part of the active site. Residues 262-267 form an important for the catalytic mechanism of dephosphorylation region; it reads PVRPGR.

It belongs to the HPrK/P family. As to quaternary structure, homohexamer. It depends on Mg(2+) as a cofactor.

The catalysed reaction is [HPr protein]-L-serine + ATP = [HPr protein]-O-phospho-L-serine + ADP + H(+). The enzyme catalyses [HPr protein]-O-phospho-L-serine + phosphate + H(+) = [HPr protein]-L-serine + diphosphate. Catalyzes the ATP- as well as the pyrophosphate-dependent phosphorylation of a specific serine residue in HPr, a phosphocarrier protein of the phosphoenolpyruvate-dependent sugar phosphotransferase system (PTS). HprK/P also catalyzes the pyrophosphate-producing, inorganic phosphate-dependent dephosphorylation (phosphorolysis) of seryl-phosphorylated HPr (P-Ser-HPr). The two antagonistic activities of HprK/P are regulated by several intracellular metabolites, which change their concentration in response to the absence or presence of rapidly metabolisable carbon sources (glucose, fructose, etc.) in the growth medium. Therefore, by controlling the phosphorylation state of HPr, HPrK/P is a sensor enzyme that plays a major role in the regulation of carbon metabolism and sugar transport: it mediates carbon catabolite repression (CCR), and regulates PTS-catalyzed carbohydrate uptake and inducer exclusion. This is HPr kinase/phosphorylase from Staphylococcus haemolyticus (strain JCSC1435).